A 582-amino-acid chain; its full sequence is Proline--tRNA ligase (582 aa).

It belongs to the class-II aminoacyl-tRNA synthetase family. ProS type 1 subfamily. Homodimer.

It is found in the cytoplasm. It catalyses the reaction tRNA(Pro) + L-proline + ATP = L-prolyl-tRNA(Pro) + AMP + diphosphate. Catalyzes the attachment of proline to tRNA(Pro) in a two-step reaction: proline is first activated by ATP to form Pro-AMP and then transferred to the acceptor end of tRNA(Pro). As ProRS can inadvertently accommodate and process non-cognate amino acids such as alanine and cysteine, to avoid such errors it has two additional distinct editing activities against alanine. One activity is designated as 'pretransfer' editing and involves the tRNA(Pro)-independent hydrolysis of activated Ala-AMP. The other activity is designated 'posttransfer' editing and involves deacylation of mischarged Ala-tRNA(Pro). The misacylated Cys-tRNA(Pro) is not edited by ProRS. In Mycobacterium ulcerans (strain Agy99), this protein is Proline--tRNA ligase.